We begin with the raw amino-acid sequence, 79 residues long: MKKYFQPSFVILIIFTVLVLGVVGNMSVDQKRCWATLKENNCVHDECRSMCLKKNPKGHGRCIKSSKGRIICLCGYDCP.

The N-terminal stretch at 1 to 24 is a signal peptide; the sequence is MKKYFQPSFVILIIFTVLVLGVVG. Cystine bridges form between cysteine 33–cysteine 78, cysteine 42–cysteine 62, cysteine 47–cysteine 72, and cysteine 51–cysteine 74.

It belongs to the DEFL family.

It localises to the secreted. This is Putative defensin-like protein 137 (LCR14) from Arabidopsis thaliana (Mouse-ear cress).